We begin with the raw amino-acid sequence, 691 residues long: Proprotein convertase subtilisin/kexin type 9 (691 aa).

The N-terminal stretch at 1–30 (MGIRCSTWLRWPLSPQLLLLLLLCPTGSRA) is a signal peptide. A propeptide spanning residues 31–151 (QDEDGDYEEL…IEEDSLVFAQ (121 aa)) is cleaved from the precursor. Y37 carries the post-translational modification Sulfotyrosine. S46 carries the phosphoserine modification. The Peptidase S8 domain occupies 154-441 (PWNLERIIPA…QRVLTPNRVA (288 aa)). Active-site charge relay system residues include D185 and H225. Cystine bridges form between C222–C254 and C322–C357. S385 functions as the Charge relay system in the catalytic mechanism. A C-terminal domain region spans residues 449–691 (ETGGQLLCRT…PSAKASWVHQ (243 aa)). Cystine bridges form between C456–C526, C476–C525, and C485–C508. Positions 495-497 (RGD) match the Cell attachment site motif. N-linked (GlcNAc...) asparagine glycosylation is present at N532. 6 disulfide bridges follow: C533–C600, C551–C599, C561–C587, C607–C678, C625–C677, and C634–C653. Residue S687 is modified to Phosphoserine.

Belongs to the peptidase S8 family. Monomer. Can self-associate to form dimers and higher multimers which may have increased LDLR degrading activity. The precursor protein but not the mature protein may form multimers. Interacts with APOB, VLDLR, LRP8/APOER2 and BACE1. The full-length immature form (pro-PCSK9) interacts with SCNN1A, SCNN1B and SCNN1G. The pro-PCSK9 form (via C-terminal domain) interacts with LDLR. Interacts (via the C-terminal domain) with ANXA2 (via repeat Annexin 1); the interaction inhibits the degradation of LDLR. Ca(2+) is required as a cofactor. In terms of processing, cleavage by furin and PCSK5 generates a truncated inactive protein that is unable to induce LDLR degradation. Post-translationally, undergoes autocatalytic cleavage in the endoplasmic reticulum to release the propeptide from the N-terminus and the cleavage of the propeptide is strictly required for its maturation and activation. The cleaved propeptide however remains associated with the catalytic domain through non-covalent interactions, preventing potential substrates from accessing its active site. As a result, it is secreted from cells as a propeptide-containing, enzymatically inactive protein. Phosphorylation protects the propeptide against proteolysis. As to expression, highly expressed in 12-day embryo. In the adult, strongly expressed in liver, small intestine, jejunum, and to a lesser extent in kidney, lung, spleen and thymus. Expression in the liver is up-regulated following partial hepatectomy.

Its subcellular location is the cytoplasm. It is found in the secreted. It localises to the endosome. The protein localises to the lysosome. The protein resides in the cell surface. Its subcellular location is the endoplasmic reticulum. It is found in the golgi apparatus. Its activity is regulated as follows. Its proteolytic activity is autoinhibited by the non-covalent binding of the propeptide to the catalytic domain. Inhibited by EGTA. Functionally, crucial player in the regulation of plasma cholesterol homeostasis. Binds to low-density lipid receptor family members: low density lipoprotein receptor (LDLR), very low density lipoprotein receptor (VLDLR), apolipoprotein E receptor (LRP1/APOER) and apolipoprotein receptor 2 (LRP8/APOER2), and promotes their degradation in intracellular acidic compartments. Acts via a non-proteolytic mechanism to enhance the degradation of the hepatic LDLR through a clathrin LDLRAP1/ARH-mediated pathway. May prevent the recycling of LDLR from endosomes to the cell surface or direct it to lysosomes for degradation. Can induce ubiquitination of LDLR leading to its subsequent degradation. Inhibits intracellular degradation of APOB via the autophagosome/lysosome pathway in a LDLR-independent manner. Involved in the disposal of non-acetylated intermediates of BACE1 in the early secretory pathway. Inhibits epithelial Na(+) channel (ENaC)-mediated Na(+) absorption by reducing ENaC surface expression primarily by increasing its proteasomal degradation. Regulates neuronal apoptosis via modulation of LRP8/APOER2 levels and related anti-apoptotic signaling pathways. This Rattus norvegicus (Rat) protein is Proprotein convertase subtilisin/kexin type 9 (Pcsk9).